A 645-amino-acid chain; its full sequence is Serine/threonine-protein kinase BUR1 (645 aa).

Residues 55-379 (YREEEKLGQG…AMKAKKHPFF (325 aa)) enclose the Protein kinase domain. ATP-binding positions include 61–69 (LGQGTFGEV) and lysine 84. Aspartate 208 (proton acceptor) is an active-site residue. Disordered stretches follow at residues 407–428 (EMNE…STDN), 442–513 (ASIP…KYPA), and 533–645 (RYRN…ADYY). Composition is skewed to polar residues over residues 409-428 (NESM…STDN) and 457-474 (IPAQ…TQNI). The segment covering 477–486 (EPIPTAPLPK) has biased composition (pro residues). The span at 578–598 (NRYQNQDYNTSRNTGYNQYSQ) shows a compositional bias: polar residues.

Belongs to the protein kinase superfamily. CMGC Ser/Thr protein kinase family. CDC2/CDKX subfamily.

It localises to the nucleus. It catalyses the reaction L-seryl-[protein] + ATP = O-phospho-L-seryl-[protein] + ADP + H(+). The enzyme catalyses L-threonyl-[protein] + ATP = O-phospho-L-threonyl-[protein] + ADP + H(+). The catalysed reaction is [DNA-directed RNA polymerase] + ATP = phospho-[DNA-directed RNA polymerase] + ADP + H(+). Its function is as follows. Serine/threonine-protein kinase involved in transcription regulation. Phosphorylates the UBC2/RAD6 ubiquitin-conjugating enzyme (E2), leading to monoubiquitination of histone H2B and the silencing of telomeric-associated genes. Also required for histone H3 methylation. Necessary for the recovery from pheromone-induced growth arrest in the cell cycle G1 phase. In Kluyveromyces lactis (strain ATCC 8585 / CBS 2359 / DSM 70799 / NBRC 1267 / NRRL Y-1140 / WM37) (Yeast), this protein is Serine/threonine-protein kinase BUR1 (BUR1).